The following is a 944-amino-acid chain: Calcium-transporting ATPase type 2C member 2 (944 aa).

Topologically, residues 1 to 104 are cytoplasmic; the sequence is MGRRLKFLQK…DNAEPVWKKY (104 aa). The tract at residues 69-93 is interaction with ORAI1; sequence VDLDSGLSEFAVAQRRLVHGWNEFV. Residues 105 to 125 traverse the membrane as a helical segment; the sequence is LDQFRNPLILLLLGSSVVSVL. Residues 126 to 127 are Extracellular-facing; it reads TK. A helical membrane pass occupies residues 128 to 148; that stretch reads EYEDAVSIALAVLIVVTVGFI. Residues 149 to 229 lie on the Cytoplasmic side of the membrane; it reads QEYRSEKSLE…EVEPCGKTDS (81 aa). The helical transmembrane segment at 230–250 threads the bilayer; the sequence is PLADGGDLSTLSNVVFMGTLV. The Extracellular segment spans residues 251–291; sequence QCGKGQGVVIGTGEQSQFGEVFKMMRAEETPKTPLQKSMDK. Threonine 262 is modified (phosphothreonine). Residue serine 266 is modified to Phosphoserine. The chain crosses the membrane as a helical span at residues 292–312; that stretch reads LGKQLTIFSFGIIGLLMLVGW. Residues 313–329 lie on the Cytoplasmic side of the membrane; the sequence is VQGKPFLSMFTVGVSLA. Ca(2+) is bound by residues valine 330, alanine 331, isoleucine 333, and glutamate 335. Residues 330 to 350 traverse the membrane as a helical segment; sequence VAAIPEGLPIVVMVTLVLGVL. The Extracellular segment spans residues 351-748; the sequence is RMAKKRVIVK…IAALSLITLS (398 aa). Catalysis depends on aspartate 377, which acts as the 4-aspartylphosphate intermediate. 2 residues coordinate Mg(2+): aspartate 672 and aspartate 676. Residues 749–769 form a helical membrane-spanning segment; the sequence is TVCNLPSPLNAMQILWVNIIM. Ca(2+)-binding residues include asparagine 766 and aspartate 770. The Cytoplasmic segment spans residues 770 to 802; sequence DGPPAQSLGVEPVDRDALRRPPRSVGDTILNRA. A helical transmembrane segment spans residues 803-823; it reads LILRVLMSAAVIIGGTLFIFW. The Extracellular segment spans residues 824–835; that stretch reads REIPANGTSTPR. Residues 836–853 form a helical membrane-spanning segment; it reads TTTMAFTCFVFFDLFNAL. Over 854–872 the chain is Cytoplasmic; the sequence is SCRSQTKLIFEIGFFRNRM. The helical transmembrane segment at 873–893 threads the bilayer; sequence FLYSVLGSLLGQLAVIYAPPL. Topologically, residues 894–903 are extracellular; sequence QKVFQTENLS. A helical membrane pass occupies residues 904–924; that stretch reads ALDLLLLTGLASSVFILSELL. Residues 925 to 944 are Cytoplasmic-facing; the sequence is KLWEKFLSRARPTQMLPEAV.

It belongs to the cation transport ATPase (P-type) (TC 3.A.3) family. Type IIA subfamily. Interacts (via N-terminus) with ORAI1 (via N- and C-termini); this interaction regulates Ca(2+) influx at the plasma membrane. As to expression, expressed in hippocampal neurons (at protein level). Expressed in lactating mammary epithelium (at protein level).

Its subcellular location is the golgi apparatus. It localises to the trans-Golgi network membrane. The protein resides in the cell membrane. The protein localises to the basolateral cell membrane. It catalyses the reaction Ca(2+)(in) + ATP + H2O = Ca(2+)(out) + ADP + phosphate + H(+). The enzyme catalyses Mn(2+)(in) + ATP + H2O = Mn(2+)(out) + ADP + phosphate + H(+). Its function is as follows. ATP-driven pump that supplies the Golgi apparatus with Ca(2+) and Mn(2+) ions, both essential cofactors for processing and trafficking of newly synthesized proteins in the secretory pathway. Within a catalytic cycle, acquires Ca(2+) or Mn(2+) ions on the cytoplasmic side of the membrane and delivers them to the lumenal side. The transfer of ions across the membrane is coupled to ATP hydrolysis and is associated with a transient phosphorylation that shifts the pump conformation from inward-facing to outward-facing state. Induces Ca(2+) influx independently of its ATP-driven pump function. At the basolateral membrane of mammary epithelial cells, interacts with Ca(2+) channel ORAI1 and mediates Ca(2+) entry independently of the Ca(2+) content of endoplasmic reticulum or Golgi stores. May facilitate transepithelial transport of large quantities of Ca(2+) for milk secretion via activation of Ca(2+) influx channels at the plasma membrane and active Ca(2+) transport at the Golgi apparatus. In Mus musculus (Mouse), this protein is Calcium-transporting ATPase type 2C member 2.